Reading from the N-terminus, the 354-residue chain is UDP-N-acetylglucosamine--N-acetylmuramyl-(pentapeptide) pyrophosphoryl-undecaprenol N-acetylglucosamine transferase (354 aa).

UDP-N-acetyl-alpha-D-glucosamine contacts are provided by residues threonine 15 to glycine 17, asparagine 127, arginine 163, serine 191, isoleucine 244, alanine 263 to glutamate 268, and glutamine 288.

The protein belongs to the glycosyltransferase 28 family. MurG subfamily.

The protein localises to the cell inner membrane. The catalysed reaction is di-trans,octa-cis-undecaprenyl diphospho-N-acetyl-alpha-D-muramoyl-L-alanyl-D-glutamyl-meso-2,6-diaminopimeloyl-D-alanyl-D-alanine + UDP-N-acetyl-alpha-D-glucosamine = di-trans,octa-cis-undecaprenyl diphospho-[N-acetyl-alpha-D-glucosaminyl-(1-&gt;4)]-N-acetyl-alpha-D-muramoyl-L-alanyl-D-glutamyl-meso-2,6-diaminopimeloyl-D-alanyl-D-alanine + UDP + H(+). It functions in the pathway cell wall biogenesis; peptidoglycan biosynthesis. Cell wall formation. Catalyzes the transfer of a GlcNAc subunit on undecaprenyl-pyrophosphoryl-MurNAc-pentapeptide (lipid intermediate I) to form undecaprenyl-pyrophosphoryl-MurNAc-(pentapeptide)GlcNAc (lipid intermediate II). The protein is UDP-N-acetylglucosamine--N-acetylmuramyl-(pentapeptide) pyrophosphoryl-undecaprenol N-acetylglucosamine transferase of Aliivibrio fischeri (strain ATCC 700601 / ES114) (Vibrio fischeri).